The sequence spans 71 residues: Sec-independent protein translocase protein TatA (71 aa).

The helical transmembrane segment at 1 to 21 (MGSFSIWHWLIVLVVVLLLFG) threads the bilayer. A disordered region spans residues 47-71 (AEEAKTVEHRTDEPVGEVKQKASKS). Residues 49 to 71 (EAKTVEHRTDEPVGEVKQKASKS) are compositionally biased toward basic and acidic residues.

It belongs to the TatA/E family. As to quaternary structure, the Tat system comprises two distinct complexes: a TatABC complex, containing multiple copies of TatA, TatB and TatC subunits, and a separate TatA complex, containing only TatA subunits. Substrates initially bind to the TatABC complex, which probably triggers association of the separate TatA complex to form the active translocon.

It localises to the cell inner membrane. Its function is as follows. Part of the twin-arginine translocation (Tat) system that transports large folded proteins containing a characteristic twin-arginine motif in their signal peptide across membranes. TatA could form the protein-conducting channel of the Tat system. This Chelativorans sp. (strain BNC1) protein is Sec-independent protein translocase protein TatA.